The following is a 473-amino-acid chain: Homeobox protein ATH1 (473 aa).

An SR/KY domain region spans residues 205–221 (SKYLHSVQEILSHFAAY). The segment at 266–336 (QRRALEAKKT…NLRERICKKI (71 aa)) is BELL domain. Residues 372–434 (IWRPQRGLPE…NARVRLWKPM (63 aa)) constitute a DNA-binding region (homeobox). Residues 448–473 (NNSHIQPNGPTLRMPKSVMMSQAMHK) are disordered.

Belongs to the TALE/BELL homeobox family. As to quaternary structure, may form heterodimeric complex with the TALE/KNOX protein STM. Most abundant in flowers.

Its subcellular location is the nucleus. Its function is as follows. Transcription factor which may be involved in the signal transduction pathway downstream of the COP1 gene. Controls floral competency as a specific activator of FLC expression. Is responsive of the nuclear import of SHOOT MERISTEMLESS (STM). The chain is Homeobox protein ATH1 (ATH1) from Arabidopsis thaliana (Mouse-ear cress).